Consider the following 493-residue polypeptide: Cysteine--tRNA ligase (493 aa).

C31 contributes to the Zn(2+) binding site. The short motif at 33–43 (PTVYGDAHLGH) is the 'HIGH' region element. Zn(2+) is bound by residues C226, H251, and E255. The 'KMSKS' region motif lies at 283–287 (KMGKS). ATP is bound at residue K286.

This sequence belongs to the class-I aminoacyl-tRNA synthetase family. As to quaternary structure, monomer. Zn(2+) is required as a cofactor.

The protein resides in the cytoplasm. The enzyme catalyses tRNA(Cys) + L-cysteine + ATP = L-cysteinyl-tRNA(Cys) + AMP + diphosphate. This chain is Cysteine--tRNA ligase, found in Phocaeicola vulgatus (strain ATCC 8482 / DSM 1447 / JCM 5826 / CCUG 4940 / NBRC 14291 / NCTC 11154) (Bacteroides vulgatus).